The chain runs to 782 residues: Formin-like protein 9 (782 aa).

The first 24 residues, 1 to 24, serve as a signal peptide directing secretion; that stretch reads MQNFWFAIFFFLLTCAPPSPLSYA. A helical transmembrane segment spans residues 102–122; it reads LLLPALSAVLVIATVIGLALF. Disordered regions lie at residues 191 to 223, 264 to 287, and 387 to 407; these read DSPE…EEEE, MSPP…RLRV, and SSSQ…PPLV. Positions 214–223 are enriched in acidic residues; that stretch reads EVNEEDEEEE. The span at 396-407 shows a compositional bias: pro residues; it reads ALPPPTRPPPLV. Residues 406–782 form the FH2 domain; sequence LVPPSQPFVV…LDQVCKEMGD (377 aa).

The protein belongs to the formin-like family. Class-I subfamily.

Its subcellular location is the membrane. Functionally, might be involved in the organization and polarity of the actin cytoskeleton. The protein is Formin-like protein 9 (FH9) of Arabidopsis thaliana (Mouse-ear cress).